The following is a 356-amino-acid chain: DNA polymerase IV (356 aa).

One can recognise a UmuC domain in the interval 6–187 (IIHIDMDYFF…LDIGDFPGVG (182 aa)). Residues Asp10 and Asp105 each contribute to the Mg(2+) site. Glu106 is an active-site residue.

It belongs to the DNA polymerase type-Y family. As to quaternary structure, monomer. It depends on Mg(2+) as a cofactor.

It is found in the cytoplasm. The enzyme catalyses DNA(n) + a 2'-deoxyribonucleoside 5'-triphosphate = DNA(n+1) + diphosphate. In terms of biological role, poorly processive, error-prone DNA polymerase involved in untargeted mutagenesis. Copies undamaged DNA at stalled replication forks, which arise in vivo from mismatched or misaligned primer ends. These misaligned primers can be extended by PolIV. Exhibits no 3'-5' exonuclease (proofreading) activity. May be involved in translesional synthesis, in conjunction with the beta clamp from PolIII. In Staphylococcus epidermidis (strain ATCC 12228 / FDA PCI 1200), this protein is DNA polymerase IV.